Reading from the N-terminus, the 581-residue chain is Penicillin-binding protein activator LpoA (581 aa).

Residues 1–26 form the signal peptide; it reads MLSILMQGLRLKKCFLPILVMFFLAG. Cysteine 27 carries the N-palmitoyl cysteine lipid modification. Cysteine 27 is lipidated: S-diacylglycerol cysteine.

The protein belongs to the LpoA family. Interacts with PBP1a.

Its subcellular location is the cell outer membrane. In terms of biological role, regulator of peptidoglycan synthesis that is essential for the function of penicillin-binding protein 1A (PBP1a). In Histophilus somni (strain 129Pt) (Haemophilus somnus), this protein is Penicillin-binding protein activator LpoA.